A 553-amino-acid chain; its full sequence is Urocanate hydratase (553 aa).

Residues 45-46 (GG), glutamine 123, 169-171 (GMG), aspartate 189, arginine 194, 235-236 (NA), 256-260 (QTSAH), 266-267 (YV), tyrosine 315, and glycine 485 contribute to the NAD(+) site.

It belongs to the urocanase family. It depends on NAD(+) as a cofactor.

The protein localises to the cytoplasm. It catalyses the reaction 4-imidazolone-5-propanoate = trans-urocanate + H2O. It participates in amino-acid degradation; L-histidine degradation into L-glutamate; N-formimidoyl-L-glutamate from L-histidine: step 2/3. Catalyzes the conversion of urocanate to 4-imidazolone-5-propionate. In Staphylococcus aureus (strain COL), this protein is Urocanate hydratase.